The following is a 205-amino-acid chain: Large ribosomal subunit protein uL3 (205 aa).

It belongs to the universal ribosomal protein uL3 family. As to quaternary structure, part of the 50S ribosomal subunit. Forms a cluster with proteins L14 and L19.

Functionally, one of the primary rRNA binding proteins, it binds directly near the 3'-end of the 23S rRNA, where it nucleates assembly of the 50S subunit. This Bacteroides fragilis (strain ATCC 25285 / DSM 2151 / CCUG 4856 / JCM 11019 / LMG 10263 / NCTC 9343 / Onslow / VPI 2553 / EN-2) protein is Large ribosomal subunit protein uL3.